The following is a 223-amino-acid chain: Ras-related protein RABA4c (223 aa).

A GTP-binding site is contributed by 22 to 29 (GDSAVGKS). The Effector region motif lies at 44–52 (SKATIGVEF). GTP contacts are provided by residues 70–74 (DTAGQ), 128–131 (NKTD), and 158–159 (SA). 2 S-geranylgeranyl cysteine lipidation sites follow: Cys-219 and Cys-220.

This sequence belongs to the small GTPase superfamily. Rab family.

It is found in the cell membrane. In terms of biological role, intracellular vesicle trafficking and protein transport. In Arabidopsis thaliana (Mouse-ear cress), this protein is Ras-related protein RABA4c (RABA4C).